The primary structure comprises 152 residues: Probable flagellum biosynthesis repressor protein FlbT (152 aa).

The protein belongs to the FlbT family.

In terms of biological role, has a post-transcriptional repressor function in flagellum biogenesis. Associates with the 5'-UTR of fljK mRNA and promotes its degradation. The protein is Probable flagellum biosynthesis repressor protein FlbT of Brucella anthropi (strain ATCC 49188 / DSM 6882 / CCUG 24695 / JCM 21032 / LMG 3331 / NBRC 15819 / NCTC 12168 / Alc 37) (Ochrobactrum anthropi).